A 308-amino-acid polypeptide reads, in one-letter code: tRNA uridine(34) hydroxylase (308 aa).

The region spanning Gln-129–Val-223 is the Rhodanese domain. Catalysis depends on Cys-183, which acts as the Cysteine persulfide intermediate.

Belongs to the TrhO family.

The catalysed reaction is uridine(34) in tRNA + AH2 + O2 = 5-hydroxyuridine(34) in tRNA + A + H2O. Functionally, catalyzes oxygen-dependent 5-hydroxyuridine (ho5U) modification at position 34 in tRNAs. The protein is tRNA uridine(34) hydroxylase of Aster yellows witches'-broom phytoplasma (strain AYWB).